The chain runs to 402 residues: MGLVSFEDVAVDFTLEEWQDLDAAQRTLYRDVMLETYSSLVFLDPCIAKPKLIFNLERGFGPWSLAEASSRSLPGVHNVSTLSDTSKKIPKTRLRQLRKTNQKTPSEDTIEAELKARQEVSKGTTSRHRRAPVKSLCRKSQRTKNQTSYNDGNLYECKDCEKVFCNNSTLIKHYRRTHNVYKPYECDECSKMYYWKSDLTSHQKTHRQRKRIYECSECGKAFFRKSHLNAHERTHSGEKPYECTECRKAFYYKSDLTRHKKTHLGEKPFKCEECKKAFSRKSKLAIHQKKHTGEKPYECTECKKAFSHQSQLTAHRIAHSSENPYECKECNKSFHWKCQLTAHQKRHTGVTYFQEVVFQQITVSDWTGNLSENGPHRPTWTWAYGIMDFVKAWSRCIIGGGL.

The KRAB domain occupies 4–75 (VSFEDVAVDF…AEASSRSLPG (72 aa)). The disordered stretch occupies residues 118 to 139 (QEVSKGTTSRHRRAPVKSLCRK). The span at 125 to 139 (TSRHRRAPVKSLCRK) shows a compositional bias: basic residues. C2H2-type zinc fingers lie at residues 155 to 178 (YECK…RRTH), 184 to 206 (YECD…QKTH), 213 to 235 (YECS…ERTH), 241 to 263 (YECT…KKTH), 269 to 291 (FKCE…QKKH), 297 to 319 (YECT…RIAH), and 325 to 347 (YECK…QKRH).

This sequence belongs to the krueppel C2H2-type zinc-finger protein family.

Its subcellular location is the nucleus. Its function is as follows. Transcription factor specifically required to repress retrotransposons in embryonic stem cells. Recognizes and binds retroviral DNA sequences from a large subset of mammalian retroviruses and retroelements and repress their expression by recruiting a repressive complex containing TRIM28/KAP1. In Mus musculus (Mouse), this protein is Zinc finger protein 809.